We begin with the raw amino-acid sequence, 407 residues long: Argininosuccinate synthase (407 aa).

10 to 18 serves as a coordination point for ATP; it reads AYSGGLDTS. The L-citrulline site is built by Y88 and S93. G118 contributes to the ATP binding site. L-aspartate contacts are provided by T120, N124, and D125. L-citrulline is bound at residue N124. Positions 128, 177, 186, 263, and 275 each coordinate L-citrulline.

This sequence belongs to the argininosuccinate synthase family. Type 1 subfamily. Homotetramer.

The protein resides in the cytoplasm. The catalysed reaction is L-citrulline + L-aspartate + ATP = 2-(N(omega)-L-arginino)succinate + AMP + diphosphate + H(+). It participates in amino-acid biosynthesis; L-arginine biosynthesis; L-arginine from L-ornithine and carbamoyl phosphate: step 2/3. In Clostridium botulinum (strain Alaska E43 / Type E3), this protein is Argininosuccinate synthase.